The chain runs to 530 residues: Potassium voltage-gated channel subfamily A member 6 (530 aa).

Residues methionine 1 to glycine 35 are disordered. At serine 3 the chain carries Phosphoserine. Positions glutamate 21–glutamate 30 are enriched in acidic residues. Residues proline 172 to leucine 193 form a helical membrane-spanning segment. Residues glycine 203–isoleucine 239 are disordered. Residue serine 222 is modified to Phosphoserine; by CK2. Residues phenylalanine 264–alanine 285 form a helical membrane-spanning segment. Cysteine 286 carries the S-palmitoyl cysteine lipid modification. Residues methionine 297 to valine 317 form a helical membrane-spanning segment. The chain crosses the membrane as a helical; Voltage-sensor span at residues leucine 339–histidine 359. An S4-S5 linker region spans residues lysine 361–methionine 374. Residues arginine 375–tyrosine 396 traverse the membrane as a helical segment. The helical intramembrane region spans proline 411–threonine 422. A Selectivity filter motif is present at residues threonine 423–aspartate 428. Residues threonine 423–tyrosine 430 lie within the membrane without spanning it. The chain crosses the membrane as a helical span at residues isoleucine 438–tyrosine 466. A Phosphoserine; by PKA modification is found at serine 512. The short motif at leucine 527–glutamate 529 is the PDZ-binding element. Threonine 528 carries the post-translational modification Phosphothreonine; by PKA.

Belongs to the potassium channel family. A (Shaker) (TC 1.A.1.2) subfamily. Kv1.6/KCNA6 sub-subfamily. Homotetramer and heterotetramer of potassium channel proteins. Interacts with KCNAB1 and KCNAB2.

It localises to the cell membrane. It carries out the reaction K(+)(in) = K(+)(out). In terms of biological role, voltage-gated potassium channel that mediates transmembrane potassium transport in excitable membranes. Forms tetrameric potassium-selective channels through which potassium ions pass in accordance with their electrochemical gradient. The channel alternates between opened and closed conformations in response to the voltage difference across the membrane. Can form functional homotetrameric channels and heterotetrameric channels that contain variable proportions of KCNA1, KCNA2, KCNA4, KNCA5, KCNA6, and possibly other family members as well; channel properties depend on the type of alpha subunits that are part of the channel. Channel properties are modulated by cytoplasmic beta subunits that regulate the subcellular location of the alpha subunits and promote rapid inactivation. Homotetrameric channels display rapid activation and slow inactivation. The sequence is that of Potassium voltage-gated channel subfamily A member 6 (Kcna6) from Rattus norvegicus (Rat).